A 1222-amino-acid polypeptide reads, in one-letter code: A disintegrin and metalloproteinase with thrombospondin motifs 16 (1222 aa).

Positions 1–20 (MESRGCAALWVLLLAQVSEQ) are cleaved as a signal peptide. Positions 21 to 277 (QTPACALGLA…EYKPSSRHKR (257 aa)) are excised as a propeptide. Residues Asn-154 and Asn-190 are each glycosylated (N-linked (GlcNAc...) asparagine). Residues 245-253 (HFCGRRKKY) carry the Cysteine switch motif. Cys-247 contacts Zn(2+). One can recognise a Peptidase M12B domain in the interval 288 to 493 (LNVETLVVVD…AQAICLADQP (206 aa)). An N-linked (GlcNAc...) asparagine glycan is attached at Asn-308. 11 cysteine pairs are disulfide-bonded: Cys-364–Cys-415, Cys-390–Cys-397, Cys-409–Cys-488, Cys-448–Cys-472, Cys-516–Cys-541, Cys-527–Cys-548, Cys-536–Cys-567, Cys-561–Cys-572, Cys-596–Cys-633, Cys-600–Cys-638, and Cys-611–Cys-623. Residue His-431 coordinates Zn(2+). Residue Glu-432 is part of the active site. Zn(2+)-binding residues include His-435 and His-441. In terms of domain architecture, Disintegrin spans 494-583 (KPVKEYKYPE…KYGDEGPKPT (90 aa)). The TSP type-1 1 domain occupies 584-639 (HGHWSDWSPWSPCSRTCGGGISHRDRLCTNPRPSHGGKFCQGSTRTLKLCNSQRCP). Asn-739, Asn-778, Asn-825, Asn-833, Asn-903, and Asn-933 each carry an N-linked (GlcNAc...) asparagine glycan. Positions 745-871 (THRGLYSKHH…KTPAAQPSYS (127 aa)) are spacer. TSP type-1 domains lie at 872-920 (WAIV…LVPC), 925-985 (CPSS…QSCP), 986-1046 (PAWS…KRCH), 1049-1113 (KKLQ…IPCP), and 1125-1179 (RGSW…HFCP). Residues 1184–1221 (RGTFCKDLFHWCYLVPQHGMCGHRFYSKQCCNTCSKSN) enclose the PLAC domain.

The cofactor is Zn(2+). In terms of processing, the precursor is cleaved by a furin endopeptidase. Glycosylated. Can be O-fucosylated by POFUT2 on a serine or a threonine residue found within the consensus sequence C1-X(2)-(S/T)-C2-G of the TSP type-1 repeat domains where C1 and C2 are the first and second cysteine residue of the repeat, respectively. Fucosylated repeats can then be further glycosylated by the addition of a beta-1,3-glucose residue by the glucosyltransferase, B3GALTL. Fucosylation mediates the efficient secretion of ADAMTS family members. Can also be C-glycosylated with one or two mannose molecules on tryptophan residues within the consensus sequence W-X-X-W of the TPRs, and N-glycosylated. These other glycosylations can also facilitate secretion.

It localises to the secreted. The protein localises to the extracellular space. The protein resides in the extracellular matrix. The sequence is that of A disintegrin and metalloproteinase with thrombospondin motifs 16 (Adamts16) from Mus musculus (Mouse).